Reading from the N-terminus, the 706-residue chain is Lysophospholipase 2 (706 aa).

The first 19 residues, 1-19 (MQLRNILQASSLISGLSLA), serve as a signal peptide directing secretion. Residues 36-588 (PCPSDDTSLV…ADYCWNGTLS (553 aa)) form the PLA2c domain. N-linked (GlcNAc...) asparagine glycans are attached at residues N47, N80, N94, N125, N162, N181, N193, N217, N279, N309, N365, N390, N491, N515, N524, N543, N567, N584, N598, N630, N634, N642, N648, N652, and N658. A disordered region spans residues 627–672 (TSGNTTSNSTTSTSSNVTSNSNSSSNTTLNSNSSSSSISSSTARSS). N680 is lipidated: GPI-anchor amidated asparagine. The propeptide at 681–706 (AAAISYANTNTLMSLLGAITALFGLI) is removed in mature form.

This sequence belongs to the lysophospholipase family. The GPI-anchor is attached to the protein in the endoplasmic reticulum and serves to target the protein to the cell surface. There, the glucosamine-inositol phospholipid moiety is cleaved off and the GPI-modified mannoprotein is covalently attached via its lipidless GPI glycan remnant to the 1,6-beta-glucan of the outer cell wall layer.

The protein resides in the secreted. The protein localises to the cell wall. It localises to the membrane. The catalysed reaction is a 1-acyl-sn-glycero-3-phosphocholine + H2O = sn-glycerol 3-phosphocholine + a fatty acid + H(+). The enzyme catalyses 1-hexadecanoyl-sn-glycero-3-phosphoethanolamine + H2O = sn-glycero-3-phosphoethanolamine + hexadecanoate + H(+). It carries out the reaction 1-hexadecanoyl-sn-glycero-3-phosphocholine + H2O = sn-glycerol 3-phosphocholine + hexadecanoate + H(+). It catalyses the reaction 1-hexadecanoyl-sn-glycero-3-phospho-L-serine + H2O = sn-glycero-3-phospho-L-serine + hexadecanoate + H(+). The catalysed reaction is 1,2-dihexadecanoyl-sn-glycero-3-phosphocholine + H2O = 1-hexadecanoyl-sn-glycero-3-phosphocholine + hexadecanoate + H(+). In terms of biological role, sequentially removes both fatty acyl groups from diacylglycerophospholipids and therefore has both phospholipase A and lysophospholipase activities. However, it does not display transacylase activity. Substrate preference is phosphatidylserine &gt; phosphatidylinositol &gt; phosphatidylcholine &gt; phosphatidylethanolamine. The substrate specificity is pH- and ion-dependent. In contrast with activities observed at optimum pH 3.5, the order of substrate preference at pH 5.5 is phosphatidylserine = phosphatidylethanolamine &gt; phosphatidylcholine &gt; phosphatidylinositol. This is Lysophospholipase 2 (PLB2) from Saccharomyces cerevisiae (strain ATCC 204508 / S288c) (Baker's yeast).